The primary structure comprises 348 residues: Fructose-1,6-bisphosphatase class 1 2 (348 aa).

Glutamate 93, aspartate 117, leucine 119, and aspartate 120 together coordinate Mg(2+). Substrate-binding positions include 120–123 (DGSS), asparagine 213, tyrosine 244, and lysine 274. Residue glutamate 280 participates in Mg(2+) binding.

The protein belongs to the FBPase class 1 family. In terms of assembly, homotetramer. The cofactor is Mg(2+).

The protein resides in the cytoplasm. The enzyme catalyses beta-D-fructose 1,6-bisphosphate + H2O = beta-D-fructose 6-phosphate + phosphate. It participates in carbohydrate biosynthesis; gluconeogenesis. In Christiangramia forsetii (strain DSM 17595 / CGMCC 1.15422 / KT0803) (Gramella forsetii), this protein is Fructose-1,6-bisphosphatase class 1 2.